The primary structure comprises 528 residues: Glutamyl-tRNA(Gln) amidotransferase subunit B, mitochondrial (528 aa).

The protein belongs to the GatB/GatE family. GatB subfamily. Subunit of the heterotrimeric GatFAB amidotransferase (AdT) complex, composed of A, B and F subunits.

Its subcellular location is the mitochondrion. It catalyses the reaction L-glutamyl-tRNA(Gln) + L-glutamine + ATP + H2O = L-glutaminyl-tRNA(Gln) + L-glutamate + ADP + phosphate + H(+). In terms of biological role, allows the formation of correctly charged Gln-tRNA(Gln) through the transamidation of misacylated Glu-tRNA(Gln) in the mitochondria. The reaction takes place in the presence of glutamine and ATP through an activated gamma-phospho-Glu-tRNA(Gln). The polypeptide is Glutamyl-tRNA(Gln) amidotransferase subunit B, mitochondrial (Clavispora lusitaniae (strain ATCC 42720) (Yeast)).